The sequence spans 143 residues: MFMGEYEHQLDTKGRMIVPSKFRYDLNERFIITRGLDKCLFGYTLEEWQVIEEKMKTLPMTKKDARKFMRMFFSGAVEVELDKQGRINIPQNLRQYANLSKECTVIGVSNRIEIWDRETWSSFYDESEESFEDIAEDLIDFDF.

SpoVT-AbrB domains lie at 5-47 and 76-119; these read EYEH…TLEE and AVEV…DRET.

Belongs to the MraZ family. Forms oligomers.

Its subcellular location is the cytoplasm. It is found in the nucleoid. The protein is Transcriptional regulator MraZ of Staphylococcus saprophyticus subsp. saprophyticus (strain ATCC 15305 / DSM 20229 / NCIMB 8711 / NCTC 7292 / S-41).